Here is a 615-residue protein sequence, read N- to C-terminus: MIKKISLLTALSVTAFSGWAQETDNNAMVVTANRFQQPVNSVLAPTTVVTREEIDRWQAKSLTDVMRRLPGVDIGQNGGLGQKSSLFIRGTNSSHVLVLIDGIRLNQAGISGSSDLSQIPLSLVQKVEYIRGSRSAVYGSDAIGGVVNIITTREKNGTTLNAGVGSKGYQSYDAATQQALGDSTTATLAGNYVYTKGFDVVAYGTASPAQPDRDGFMSKSLYGTVEHKFGDQFSGFLRGYGYDNRTDYDNFSSVDTRQLYSQTWDTGLRYQSGIYSTQLIGSYSHSKDYDYDPLRGLHSSGSTLVDSQQYNAQWGNVLQVGAGTVSAGVDWQDQIIKPDSTSVNREESQNNTGIYLTGQQRFASIVLEGSVRGDDQSEFGWHNTWRTGASWEFIEGYSLIASYGTAFKAPNMGQLYGRFGSNRDLQPEESKQWESGVEGLTGPVIWRVSGYRNDIDNLIDATGSTGYVYENVGKAKIKGIEATASFDTGPVGHRISYDYVDSRNAITDEPLARRAKQQVKYQLDWQVYDLDWSVTYQYLGSRYDKDYGNYIPAVDDYQTVKLGGVSLWDLAASYPVTSHLTVRGRIANLFDKDYETAYGYRTAGREYYLTGSYTF.

Positions 1–20 are cleaved as a signal peptide; the sequence is MIKKISLLTALSVTAFSGWA. The short motif at 26 to 33 is the TonB box element; it reads NAMVVTAN. Residues 38-152 form the TBDR plug domain; it reads PVNSVLAPTT…IGGVVNIITT (115 aa). Cyanocob(III)alamin is bound by residues S85, N92, and 110 to 111; that span reads IS. In terms of domain architecture, TBDR beta-barrel spans 155–615; sequence KNGTTLNAGV…EYYLTGSYTF (461 aa). Beta stranded transmembrane passes span 158 to 165, 169 to 178, and 184 to 195; these read TTLNAGVG, YQSYDAATQQ, and TTATLAGNYVYT. D199, Q210, D212, and D214 together coordinate Ca(2+). Beta stranded transmembrane passes span 216–226 and 231–247; these read FMSKSLYGTVE and DQFSGFLRGYGYDNRTD. Positions 248, 249, and 255 each coordinate Ca(2+). The next 14 membrane-spanning stretches (beta stranded) occupy residues 257-271, 273-290, 303-319, 322-331, 347-363, 365-375, 379-394, 397-411, 429-438, 444-453, 468-486, 490-505, 513-525, and 531-546; these read RQLYSQTWDTGLRYQ, GIYSTQLIGSYSHSKDYD, TLVDSQQYNAQWGNVLQ, AGTVSAGVDW, ESQNNTGIYLTGQQRFA, IVLEGSVRGDD, FGWHNTWRTGASWEFI, YSLIASYGTAFKAPN, ESKQWESGVE, VIWRVSGYRN, VYENVGKAKIKGIEATASF, PVGHRISYDYVDSRNA, RRAKQQVKYQLDW, and DWSVTYQYLGSRYDKD. Residue T303 participates in cyanocob(III)alamin binding. Position 513 (R513) interacts with cyanocob(III)alamin. Residue Y547 participates in cyanocob(III)alamin binding. 3 beta stranded membrane passes run 559–573, 586–597, and 603–615; these read TVKLGGVSLWDLAAS, IANLFDKDYETA, and AGREYYLTGSYTF. Residues 598–615 carry the TonB C-terminal box motif; it reads YGYRTAGREYYLTGSYTF.

It belongs to the TonB-dependent receptor family. BtuB (TC 1.B.14.3.1) subfamily.

The protein localises to the cell outer membrane. Functionally, involved in the active translocation of vitamin B12 (cyanocobalamin) across the outer membrane to the periplasmic space. It derives its energy for transport by interacting with the trans-periplasmic membrane protein TonB. This is Vitamin B12 transporter BtuB from Pectobacterium atrosepticum (strain SCRI 1043 / ATCC BAA-672) (Erwinia carotovora subsp. atroseptica).